Consider the following 43-residue polypeptide: Methionine aminopeptidase (43 aa).

The protein belongs to the peptidase M24A family. Methionine aminopeptidase type 1 subfamily. Monomer. Requires Co(2+) as cofactor. It depends on Zn(2+) as a cofactor. Mn(2+) serves as cofactor. Fe(2+) is required as a cofactor.

It catalyses the reaction Release of N-terminal amino acids, preferentially methionine, from peptides and arylamides.. Removes the N-terminal methionine from nascent proteins. The N-terminal methionine is often cleaved when the second residue in the primary sequence is small and uncharged (Met-Ala-, Cys, Gly, Pro, Ser, Thr, or Val). Requires deformylation of the N(alpha)-formylated initiator methionine before it can be hydrolyzed. The chain is Methionine aminopeptidase (map) from Klebsiella oxytoca.